Consider the following 397-residue polypeptide: Lysophospholipid transporter LplT (397 aa).

11 helical membrane-spanning segments follow: residues 16–36, 53–73, 91–111, 139–159, 164–184, 227–247, 253–273, 281–301, 305–325, 352–372, and 373–393; these read MLAV…LLFA, VLQM…GQFA, LGAG…LVGI, LMES…GILA, LAAL…NLWI, LFWG…PVAL, AMPT…AGAA, TVSR…AFAV, LLPA…FIVP, NVAM…GVPP, and VAVG…LWVW.

The protein belongs to the major facilitator superfamily. LplT (TC 2.A.1.42) family.

It is found in the cell inner membrane. Its function is as follows. Catalyzes the facilitated diffusion of 2-acyl-glycero-3-phosphoethanolamine (2-acyl-GPE) into the cell. The protein is Lysophospholipid transporter LplT of Klebsiella pneumoniae (strain 342).